The chain runs to 105 residues: Malonate decarboxylase acyl carrier protein (105 aa).

S28 carries the post-translational modification O-(phosphoribosyl dephospho-coenzyme A)serine.

Belongs to the MdcC family. Covalently binds the prosthetic group of malonate decarboxylase.

The protein localises to the cytoplasm. Functionally, subunit of malonate decarboxylase, it is an acyl carrier protein to which acetyl and malonyl thioester residues are bound via a 2'-(5''-phosphoribosyl)-3'-dephospho-CoA prosthetic group and turn over during the catalytic mechanism. This Bradyrhizobium diazoefficiens (strain JCM 10833 / BCRC 13528 / IAM 13628 / NBRC 14792 / USDA 110) protein is Malonate decarboxylase acyl carrier protein.